The sequence spans 669 residues: DNA ligase (669 aa).

NAD(+) contacts are provided by residues 34 to 38 (DAEYD), 83 to 84 (SL), and Glu-114. Lys-116 functions as the N6-AMP-lysine intermediate in the catalytic mechanism. NAD(+) is bound by residues Arg-137, Glu-171, Lys-287, and Lys-311. Residues Cys-405, Cys-408, Cys-423, and Cys-428 each coordinate Zn(2+). Positions 591–669 (NVESYFAGKT…EERFLQELNK (79 aa)) constitute a BRCT domain.

The protein belongs to the NAD-dependent DNA ligase family. LigA subfamily. Mg(2+) is required as a cofactor. The cofactor is Mn(2+).

It catalyses the reaction NAD(+) + (deoxyribonucleotide)n-3'-hydroxyl + 5'-phospho-(deoxyribonucleotide)m = (deoxyribonucleotide)n+m + AMP + beta-nicotinamide D-nucleotide.. In terms of biological role, DNA ligase that catalyzes the formation of phosphodiester linkages between 5'-phosphoryl and 3'-hydroxyl groups in double-stranded DNA using NAD as a coenzyme and as the energy source for the reaction. It is essential for DNA replication and repair of damaged DNA. The polypeptide is DNA ligase (Bacillus cereus (strain AH187)).